The sequence spans 344 residues: NADH-quinone oxidoreductase subunit H 2 (344 aa).

Helical transmembrane passes span 13 to 33 (LPIL…VAWL), 82 to 102 (ILFL…WAVI), 116 to 136 (ALLY…LAGW), 161 to 181 (MGFA…GEIV), 188 to 208 (FWHW…ISGV), 240 to 260 (LFFL…ALMF), 280 to 300 (VPGI…YLWF), and 319 to 339 (VFIP…VAQL).

The protein belongs to the complex I subunit 1 family. As to quaternary structure, NDH-1 is composed of 14 different subunits. Subunits NuoA, H, J, K, L, M, N constitute the membrane sector of the complex.

Its subcellular location is the cell inner membrane. The enzyme catalyses a quinone + NADH + 5 H(+)(in) = a quinol + NAD(+) + 4 H(+)(out). NDH-1 shuttles electrons from NADH, via FMN and iron-sulfur (Fe-S) centers, to quinones in the respiratory chain. The immediate electron acceptor for the enzyme in this species is believed to be ubiquinone. Couples the redox reaction to proton translocation (for every two electrons transferred, four hydrogen ions are translocated across the cytoplasmic membrane), and thus conserves the redox energy in a proton gradient. This subunit may bind ubiquinone. The polypeptide is NADH-quinone oxidoreductase subunit H 2 (Nitrosococcus oceani (strain ATCC 19707 / BCRC 17464 / JCM 30415 / NCIMB 11848 / C-107)).